A 397-amino-acid polypeptide reads, in one-letter code: Acetylornithine aminotransferase (397 aa).

F129 is a binding site for pyridoxal 5'-phosphate. Residue R132 participates in N(2)-acetyl-L-ornithine binding. Residue 214 to 217 participates in pyridoxal 5'-phosphate binding; that stretch reads DEVQ. The residue at position 243 (K243) is an N6-(pyridoxal phosphate)lysine. Residue S271 coordinates N(2)-acetyl-L-ornithine. Position 272 (T272) interacts with pyridoxal 5'-phosphate.

This sequence belongs to the class-III pyridoxal-phosphate-dependent aminotransferase family. ArgD subfamily. Homodimer. Requires pyridoxal 5'-phosphate as cofactor.

Its subcellular location is the cytoplasm. It carries out the reaction N(2)-acetyl-L-ornithine + 2-oxoglutarate = N-acetyl-L-glutamate 5-semialdehyde + L-glutamate. The protein operates within amino-acid biosynthesis; L-arginine biosynthesis; N(2)-acetyl-L-ornithine from L-glutamate: step 4/4. The protein is Acetylornithine aminotransferase of Neisseria meningitidis serogroup A / serotype 4A (strain DSM 15465 / Z2491).